We begin with the raw amino-acid sequence, 367 residues long: Queuine tRNA-ribosyltransferase (367 aa).

Asp-89 functions as the Proton acceptor in the catalytic mechanism. Substrate is bound by residues 89 to 93 (DSGGF), Asp-143, Gln-187, and Gly-214. The tract at residues 245–251 (GVGTPAD) is RNA binding. The active-site Nucleophile is the Asp-264. The segment at 269-273 (TRNAR) is RNA binding; important for wobble base 34 recognition. Residues Cys-302, Cys-304, Cys-307, and His-333 each contribute to the Zn(2+) site.

The protein belongs to the queuine tRNA-ribosyltransferase family. Homodimer. Within each dimer, one monomer is responsible for RNA recognition and catalysis, while the other monomer binds to the replacement base PreQ1. Requires Zn(2+) as cofactor.

The catalysed reaction is 7-aminomethyl-7-carbaguanine + guanosine(34) in tRNA = 7-aminomethyl-7-carbaguanosine(34) in tRNA + guanine. The protein operates within tRNA modification; tRNA-queuosine biosynthesis. Its function is as follows. Catalyzes the base-exchange of a guanine (G) residue with the queuine precursor 7-aminomethyl-7-deazaguanine (PreQ1) at position 34 (anticodon wobble position) in tRNAs with GU(N) anticodons (tRNA-Asp, -Asn, -His and -Tyr). Catalysis occurs through a double-displacement mechanism. The nucleophile active site attacks the C1' of nucleotide 34 to detach the guanine base from the RNA, forming a covalent enzyme-RNA intermediate. The proton acceptor active site deprotonates the incoming PreQ1, allowing a nucleophilic attack on the C1' of the ribose to form the product. After dissociation, two additional enzymatic reactions on the tRNA convert PreQ1 to queuine (Q), resulting in the hypermodified nucleoside queuosine (7-(((4,5-cis-dihydroxy-2-cyclopenten-1-yl)amino)methyl)-7-deazaguanosine). In Nitrosospira multiformis (strain ATCC 25196 / NCIMB 11849 / C 71), this protein is Queuine tRNA-ribosyltransferase.